Consider the following 196-residue polypeptide: Putative 3-methyladenine DNA glycosylase (196 aa).

It belongs to the DNA glycosylase MPG family.

The sequence is that of Putative 3-methyladenine DNA glycosylase from Chlorobium luteolum (strain DSM 273 / BCRC 81028 / 2530) (Pelodictyon luteolum).